A 310-amino-acid polypeptide reads, in one-letter code: Porphobilinogen deaminase (310 aa).

An S-(dipyrrolylmethanemethyl)cysteine modification is found at Cys241.

This sequence belongs to the HMBS family. Monomer. Dipyrromethane serves as cofactor.

It carries out the reaction 4 porphobilinogen + H2O = hydroxymethylbilane + 4 NH4(+). The protein operates within porphyrin-containing compound metabolism; protoporphyrin-IX biosynthesis; coproporphyrinogen-III from 5-aminolevulinate: step 2/4. Functionally, tetrapolymerization of the monopyrrole PBG into the hydroxymethylbilane pre-uroporphyrinogen in several discrete steps. The chain is Porphobilinogen deaminase from Pelobacter propionicus (strain DSM 2379 / NBRC 103807 / OttBd1).